We begin with the raw amino-acid sequence, 302 residues long: Beta-lactamase (302 aa).

Residues 1 to 11 show a composition bias toward basic residues; it reads MADRRRVHAWA. A signal peptide spans 1–29; sequence MADRRRVHAWARARPAAPEPAPPTPSAAA. Residues 1–43 form a disordered region; the sequence is MADRRRVHAWARARPAAPEPAPPTPSAAAPSVAPGPAATPPDP. Low complexity predominate over residues 26–36; it reads SAAAPSVAPGP. Ser-85 (acyl-ester intermediate) is an active-site residue. Ser-143 contacts substrate. Glu-179 (proton acceptor) is an active-site residue. 247 to 249 is a binding site for substrate; it reads KTG.

The protein belongs to the class-A beta-lactamase family.

Its subcellular location is the secreted. The catalysed reaction is a beta-lactam + H2O = a substituted beta-amino acid. In terms of biological role, active on penicillins but not on cephalosporins. The polypeptide is Beta-lactamase (bla) (Amycolatopsis lactamdurans (Nocardia lactamdurans)).